We begin with the raw amino-acid sequence, 308 residues long: Pycsar effector protein PaPycTIR (308 aa).

A nucleoside 3',5'-cyclic phosphate is bound at residue 54–143; the sequence is LITEDAEDSE…RQVTRQLVDR (90 aa). Residues 160-278 are TIR-like; that stretch reads VFIICSVEAL…DLKGLTTIGY (119 aa).

Its subcellular location is the cytoplasm. It carries out the reaction NAD(+) + H2O = ADP-D-ribose + nicotinamide + H(+). Its function is as follows. Pycsar (pyrimidine cyclase system for antiphage resistance) provides immunity against bacteriophage. The pyrimidine cyclase (PycC) synthesizes cyclic nucleotides in response to infection; these serve as specific second messenger signals. The signals activate the adjacent effector, leading to bacterial cell death and abortive phage infection. A clade A Pycsar system. The effector gene of a two-gene Pycsar system. Expression of this and adjacent uridylate cyclase PaPycC (AC P0DV40) probably confers resistance to bacteriophage. The genes are probably only expressed in response to bacteriophage infection. Probably only responds to cUMP (produced by its cognate NTP cyclase), acts by depleting cellular NAD(+) levels. This chain is Pycsar effector protein PaPycTIR, found in Pseudomonas aeruginosa.